A 363-amino-acid polypeptide reads, in one-letter code: Double-strand-specific pac1 ribonuclease (363 aa).

Disordered stretches follow at residues 1–35 (MGRFKRHHEGDSDSSSSASDSLSRGRRSLGHKRSS) and 92–138 (SRHD…PPLR). The segment covering 13–22 (DSSSSASDSL) has biased composition (low complexity). Basic residues predominate over residues 24–35 (RGRRSLGHKRSS). At Ser122 the chain carries Phosphoserine. The region spanning 139–262 (SEKLKEQVFM…YLGALILDGQ (124 aa)) is the RNase III domain. Positions 285-356 (RPIDKLAKSK…AMQALEVLAK (72 aa)) constitute a DRBM domain.

Requires Mg(2+) as cofactor.

The enzyme catalyses Endonucleolytic cleavage to 5'-phosphomonoester.. Its function is as follows. Digests double-stranded RNA. Converts long double-stranded RNAs into short oligonucleotides, leaving 5'-phosphates on their cleavage products. Probably inhibits mating and meiosis by degrading a specific mRNA required for sexual development. The sequence is that of Double-strand-specific pac1 ribonuclease (pac1) from Schizosaccharomyces pombe (strain 972 / ATCC 24843) (Fission yeast).